The sequence spans 156 residues: ATP synthase subunit b (156 aa).

Residues 7-27 form a helical membrane-spanning segment; it reads LIGELIAFTVFVLFCMKFVWP.

This sequence belongs to the ATPase B chain family. F-type ATPases have 2 components, F(1) - the catalytic core - and F(0) - the membrane proton channel. F(1) has five subunits: alpha(3), beta(3), gamma(1), delta(1), epsilon(1). F(0) has three main subunits: a(1), b(2) and c(10-14). The alpha and beta chains form an alternating ring which encloses part of the gamma chain. F(1) is attached to F(0) by a central stalk formed by the gamma and epsilon chains, while a peripheral stalk is formed by the delta and b chains.

It localises to the cell inner membrane. In terms of biological role, f(1)F(0) ATP synthase produces ATP from ADP in the presence of a proton or sodium gradient. F-type ATPases consist of two structural domains, F(1) containing the extramembraneous catalytic core and F(0) containing the membrane proton channel, linked together by a central stalk and a peripheral stalk. During catalysis, ATP synthesis in the catalytic domain of F(1) is coupled via a rotary mechanism of the central stalk subunits to proton translocation. Functionally, component of the F(0) channel, it forms part of the peripheral stalk, linking F(1) to F(0). This Pseudoalteromonas translucida (strain TAC 125) protein is ATP synthase subunit b.